Consider the following 94-residue polypeptide: Small ribosomal subunit protein bS6 (94 aa).

It belongs to the bacterial ribosomal protein bS6 family.

Binds together with bS18 to 16S ribosomal RNA. This chain is Small ribosomal subunit protein bS6, found in Fusobacterium nucleatum subsp. nucleatum (strain ATCC 25586 / DSM 15643 / BCRC 10681 / CIP 101130 / JCM 8532 / KCTC 2640 / LMG 13131 / VPI 4355).